Consider the following 450-residue polypeptide: Keratin, type I cytoskeletal 25 (450 aa).

The tract at residues 1–24 (MSLRLPSGSRRAGPRPTTGSLRLS) is disordered. The head stretch occupies residues 1–78 (MSLRLPSGSR…MNEGGLLSGN (78 aa)). Residues 79-114 (EKVTMQNLNDRLASYLENVRALEEANADLEQKIKGW) are coil 1A. Residues 79–394 (EKVTMQNLND…LLIGGDDGAC (316 aa)) form the IF rod domain. Residues 115-136 (YEKFGPGSCRGLDHDYSRYLPI) are linker 1. Residues 137-228 (IEDLKNQIIA…KNHKEEMQVL (92 aa)) are coil 1B. Residues 229–251 (QCAAGGNVNVEMNAAPGVDLTVL) are linker 12. The segment at 252–390 (LNNMRAEYEA…ETYCLLIGGD (139 aa)) is coil 2. Residues 391-450 (DGACKSGGYKSKDYAAGNMGNQMKDPIRAIVVKKVLEEVDQRSKVLTTRLHSLEEKSQSN) are tail. Serine 442 bears the Phosphoserine mark.

The protein belongs to the intermediate filament family. As to quaternary structure, heterodimer of a type I and a type II keratin. Heterodimer with type II keratin KRT5 leading to the formation of keratin intermediate filament (KIF) network. Interacts with KRT6A to form filaments. Expressed in skin and wool follicle. Expression localized to the inner root sheath of wool follicle.

The protein resides in the cytoplasm. In terms of biological role, essential for the proper assembly of type I and type II keratin protein complexes and formation of keratin intermediate filaments in the inner root sheath (irs). Plays a role in the cytoskeleton organization. The sequence is that of Keratin, type I cytoskeletal 25 from Ovis aries (Sheep).